The chain runs to 1111 residues: Probable arabinosyltransferase A (1111 aa).

13 helical membrane passes run 12 to 34 (IIRL…VPLL), 205 to 224 (IAVG…LSAL), 333 to 355 (VWMR…HWVL), 370 to 387 (VAVL…LPFN), 394 to 413 (PLIA…AIAL), 423 to 445 (AVVA…ALLT), 462 to 484 (GLLA…VFHS), 530 to 547 (FPVL…VVLL), 554 to 576 (GLAS…LLTF), 581 to 603 (WAIQ…AFAF), 615 to 637 (TVYI…GWFG), 652 to 674 (IAGH…LAGG), and 695 to 717 (FLAT…GSLA). The tract at residues 804-831 (GLVNSDASPNKPNVTFSDSAGTAGGKGP) is disordered. The span at 808 to 823 (SDASPNKPNVTFSDSA) shows a compositional bias: polar residues.

Belongs to the emb family.

The protein localises to the cell membrane. Functionally, arabinosyl transferase responsible for the polymerization of arabinose into the arabinan of arabinogalactan. This chain is Probable arabinosyltransferase A (embA), found in Mycobacterium leprae (strain TN).